We begin with the raw amino-acid sequence, 181 residues long: MGDPKRPKKKYVEGKPKRLWNSDLLMSELRLIGEYGLRNKKELWLARALLRSIKHRAREILSAPMEIRGEAEKRLKDRLFRMGLISDINIPLDSVLALDVTAVLERRLQTLVYRKGMARSIHEARQLIVHGHISINGVRVRSPGYLVPRNLEDGIGFAPTSRIVKAKVTQQVNQGGQAVNQ.

Positions 106 to 168 (RRLQTLVYRK…PTSRIVKAKV (63 aa)) constitute an S4 RNA-binding domain.

This sequence belongs to the universal ribosomal protein uS4 family. As to quaternary structure, part of the 30S ribosomal subunit. Contacts protein S5. The interaction surface between S4 and S5 is involved in control of translational fidelity.

In terms of biological role, one of the primary rRNA binding proteins, it binds directly to 16S rRNA where it nucleates assembly of the body of the 30S subunit. With S5 and S12 plays an important role in translational accuracy. The polypeptide is Small ribosomal subunit protein uS4 (Caldivirga maquilingensis (strain ATCC 700844 / DSM 13496 / JCM 10307 / IC-167)).